Here is a 349-residue protein sequence, read N- to C-terminus: Small ribosomal subunit biogenesis GTPase RsgA (349 aa).

Basic residues predominate over residues Met1–Gln11. The interval Met1 to Val29 is disordered. In terms of domain architecture, CP-type G spans His102–Phe272. Residues Asn158 to Asp161 and Gly212 to Ser220 each bind GTP. Zn(2+)-binding residues include Cys296, Cys301, His303, and Cys309.

This sequence belongs to the TRAFAC class YlqF/YawG GTPase family. RsgA subfamily. In terms of assembly, monomer. Associates with 30S ribosomal subunit, binds 16S rRNA. The cofactor is Zn(2+).

It localises to the cytoplasm. Functionally, one of several proteins that assist in the late maturation steps of the functional core of the 30S ribosomal subunit. Helps release RbfA from mature subunits. May play a role in the assembly of ribosomal proteins into the subunit. Circularly permuted GTPase that catalyzes slow GTP hydrolysis, GTPase activity is stimulated by the 30S ribosomal subunit. The chain is Small ribosomal subunit biogenesis GTPase RsgA from Pectobacterium atrosepticum (strain SCRI 1043 / ATCC BAA-672) (Erwinia carotovora subsp. atroseptica).